Here is a 334-residue protein sequence, read N- to C-terminus: Putative B3 domain-containing protein At3g49610 (334 aa).

2 disordered regions span residues 69-89 (ERRTLGSSPTKTNTLFEGSEK) and 133-178 (DEFE…KFDP). 2 stretches are compositionally biased toward polar residues: residues 73-84 (LGSSPTKTNTLF) and 141-157 (KSPTIRNSQSSPSSCLM). Residues 161 to 173 (KRKRYQSSGKSKK) show a composition bias toward basic residues. Residues 229–334 (FNKLLRNDFL…GVLCFALEKE (106 aa)) constitute a DNA-binding region (TF-B3).

It is found in the nucleus. This is Putative B3 domain-containing protein At3g49610 from Arabidopsis thaliana (Mouse-ear cress).